The primary structure comprises 63 residues: uncharacterized protein (63 aa).

An N-terminal signal peptide occupies residues 1–18 (MLNSEHFNLIQRALDATA).

This is an uncharacterized protein from Bacillus subtilis (strain 168).